Reading from the N-terminus, the 301-residue chain is Syntaxin-17 (301 aa).

At serine 2 the chain carries N-acetylserine. Residues 2–227 lie on the Cytoplasmic side of the membrane; that stretch reads SEDEEKVKLR…KNLQKAAKYK (226 aa). Lysine 41 carries the post-translational modification N6-acetyllysine. Residues 49-128 are a coiled coil; it reads DKLHEEHINA…QVNDEELLQP (80 aa). At tyrosine 156 the chain carries Phosphotyrosine; by ABL1. The t-SNARE coiled-coil homology domain occupies 161–223; that stretch reads IPQDQNAAES…EEGTKNLQKA (63 aa). A helical transmembrane segment spans residues 228–248; sequence LAALPVAGALIGGVVGGPIGL. The necessary and sufficient for localization to autophagosome stretch occupies residues 228–274; the sequence is LAALPVAGALIGGVVGGPIGLLAGFKVAGIAAALGGGVLGFTGGKLI. The Lumenal portion of the chain corresponds to 249 to 253; the sequence is LAGFK. A helical transmembrane segment spans residues 254-274; it reads VAGIAAALGGGVLGFTGGKLI. Topologically, residues 275–301 are cytoplasmic; the sequence is QRRKQKMMEKLTSSCPDLPSQSDKKRS. Serine 288 carries the post-translational modification Phosphoserine. An Endoplasmic reticulum retention signal motif is present at residues 298-301; it reads KKRS.

The protein belongs to the syntaxin family. In terms of assembly, forms a SNARE complex composed of VAMP8, SNAP29 and STX17 involved in fusion of autophagosome with lysosome. May interact with VTI1B. Probably interacts with BET1, SCFD1 and SEC22B. Interacts with PTPN2 and ABL1; involved in STX17 phosphorylation. Interacts with COPB1. Interacts with TMED9 and TMED10; the interaction is direct. Interacts with VAMP7. Interacts with RUBCNL/PACER; promoting targeting of RUBCNL/PACER to autophagosome. Interacts with VAMP8, SNAP29, VPS39 and VPS41; these interactions are increased in the absence of TMEM39A. Interacts with IRGM; promoting STX17 recruitment to autophagosomes. Interacts with ATG8 proteins GABARAP and MAP1LC3B. Interacts with RNF115; this interaction enhances STX17 stability which in turn promotes autophagosome maturation. Interacts with RAB39A (GTP-bound); the interaction promotes autophagosome-lysosome membrane fusion driven by STX17-SNAP29-VAMP8. Interacts with RAB39B; the interaction may promote a different fonction in autophagy as compared with RAB39A. In terms of processing, dephosphorylation by PTPN2; regulates exit from the endoplasmic reticulum. Phosphorylated at Tyr-156 probably by ABL1.

The protein localises to the endoplasmic reticulum membrane. The protein resides in the smooth endoplasmic reticulum membrane. It is found in the endoplasmic reticulum-Golgi intermediate compartment membrane. Its subcellular location is the cytoplasmic vesicle. It localises to the autophagosome membrane. The protein localises to the COPII-coated vesicle membrane. The protein resides in the cytoplasm. It is found in the cytosol. Its subcellular location is the mitochondrion membrane. It localises to the autolysosome membrane. In terms of biological role, SNAREs, soluble N-ethylmaleimide-sensitive factor-attachment protein receptors, are essential proteins for fusion of cellular membranes. SNAREs localized on opposing membranes assemble to form a trans-SNARE complex, an extended, parallel four alpha-helical bundle that drives membrane fusion. STX17 is a SNARE of the autophagosome involved in autophagy through the direct control of autophagosome membrane fusion with the lysosome membrane. May also play a role in the early secretory pathway where it may maintain the architecture of the endoplasmic reticulum-Golgi intermediate compartment/ERGIC and Golgi and/or regulate transport between the endoplasmic reticulum, the ERGIC and the Golgi. The polypeptide is Syntaxin-17 (Mus musculus (Mouse)).